A 490-amino-acid polypeptide reads, in one-letter code: Aspartyl/glutamyl-tRNA(Asn/Gln) amidotransferase subunit B (490 aa).

It belongs to the GatB/GatE family. GatB subfamily. Heterotrimer of A, B and C subunits.

The enzyme catalyses L-glutamyl-tRNA(Gln) + L-glutamine + ATP + H2O = L-glutaminyl-tRNA(Gln) + L-glutamate + ADP + phosphate + H(+). It catalyses the reaction L-aspartyl-tRNA(Asn) + L-glutamine + ATP + H2O = L-asparaginyl-tRNA(Asn) + L-glutamate + ADP + phosphate + 2 H(+). Functionally, allows the formation of correctly charged Asn-tRNA(Asn) or Gln-tRNA(Gln) through the transamidation of misacylated Asp-tRNA(Asn) or Glu-tRNA(Gln) in organisms which lack either or both of asparaginyl-tRNA or glutaminyl-tRNA synthetases. The reaction takes place in the presence of glutamine and ATP through an activated phospho-Asp-tRNA(Asn) or phospho-Glu-tRNA(Gln). This chain is Aspartyl/glutamyl-tRNA(Asn/Gln) amidotransferase subunit B, found in Symbiobacterium thermophilum (strain DSM 24528 / JCM 14929 / IAM 14863 / T).